A 29-amino-acid chain; its full sequence is Trypsin inhibitor 5 (29 aa).

Intrachain disulfides connect cysteine 3/cysteine 20, cysteine 10/cysteine 22, and cysteine 16/cysteine 28.

This sequence belongs to the protease inhibitor I7 (squash-type serine protease inhibitor) family.

Its subcellular location is the secreted. Its function is as follows. Strongly inhibits trypsin, weakly inhibits chymotrypsin. The polypeptide is Trypsin inhibitor 5 (Cyclanthera pedata (Achocha)).